Consider the following 260-residue polypeptide: Small ribosomal subunit protein eS1 (260 aa).

Residue Lys-30 is modified to N6-acetyllysine; alternate. Residue Lys-30 forms a Glycyl lysine isopeptide (Lys-Gly) (interchain with G-Cter in SUMO2); alternate linkage. An N6-acetyllysine modification is found at Lys-52. Tyr-151 is modified (ADP-ribosyltyrosine). Residues 228–260 (HGEGSSSGKATGDETGAKVERADGYEPPVQESV) are disordered. Ser-232 and Ser-233 each carry phosphoserine. Residues 238 to 251 (TGDETGAKVERADG) are compositionally biased toward basic and acidic residues. Lys-245 carries the N6-acetyllysine; alternate modification. A Glycyl lysine isopeptide (Lys-Gly) (interchain with G-Cter in SUMO2); alternate cross-link involves residue Lys-245. Residue Tyr-252 is modified to Phosphotyrosine. Phosphoserine is present on Ser-259.

This sequence belongs to the eukaryotic ribosomal protein eS1 family. Component of the small ribosomal subunit. Mature ribosomes consist of a small (40S) and a large (60S) subunit. The 40S subunit contains about 33 different proteins and 1 molecule of RNA (18S). The 60S subunit contains about 49 different proteins and 3 molecules of RNA (28S, 5.8S and 5S). Identified in a IGF2BP1-dependent mRNP granule complex containing untranslated mRNAs. Binds with high affinity to IPO4. Interacts with DDIT3. Part of the small subunit (SSU) processome, composed of more than 70 proteins and the RNA chaperone small nucleolar RNA (snoRNA) U3. ADP-ribosylated at Tyr-151 by PARP1 in presence of HPF1.

It is found in the cytoplasm. The protein localises to the nucleus. Its subcellular location is the nucleolus. Its function is as follows. Component of the small ribosomal subunit. The ribosome is a large ribonucleoprotein complex responsible for the synthesis of proteins in the cell. Part of the small subunit (SSU) processome, first precursor of the small eukaryotic ribosomal subunit. During the assembly of the SSU processome in the nucleolus, many ribosome biogenesis factors, an RNA chaperone and ribosomal proteins associate with the nascent pre-rRNA and work in concert to generate RNA folding, modifications, rearrangements and cleavage as well as targeted degradation of pre-ribosomal RNA by the RNA exosome. May play a role during erythropoiesis through regulation of transcription factor DDIT3. This chain is Small ribosomal subunit protein eS1, found in Felis catus (Cat).